Consider the following 275-residue polypeptide: NH(3)-dependent NAD(+) synthetase (275 aa).

Residue 43–50 (GISGGVDS) participates in ATP binding. Asp-49 provides a ligand contact to Mg(2+). Arg-145 provides a ligand contact to deamido-NAD(+). Thr-165 is an ATP binding site. Residue Glu-170 coordinates Mg(2+). Lys-178 and Asp-185 together coordinate deamido-NAD(+). Residues Lys-194 and Thr-216 each contribute to the ATP site. 265-266 (HK) provides a ligand contact to deamido-NAD(+).

The protein belongs to the NAD synthetase family. As to quaternary structure, homodimer.

It carries out the reaction deamido-NAD(+) + NH4(+) + ATP = AMP + diphosphate + NAD(+) + H(+). It participates in cofactor biosynthesis; NAD(+) biosynthesis; NAD(+) from deamido-NAD(+) (ammonia route): step 1/1. Its function is as follows. Catalyzes the ATP-dependent amidation of deamido-NAD to form NAD. Uses ammonia as a nitrogen source. The sequence is that of NH(3)-dependent NAD(+) synthetase from Shewanella denitrificans (strain OS217 / ATCC BAA-1090 / DSM 15013).